We begin with the raw amino-acid sequence, 311 residues long: Methionyl-tRNA formyltransferase (311 aa).

109–112 lines the (6S)-5,6,7,8-tetrahydrofolate pocket; sequence SLLP.

The protein belongs to the Fmt family.

The catalysed reaction is L-methionyl-tRNA(fMet) + (6R)-10-formyltetrahydrofolate = N-formyl-L-methionyl-tRNA(fMet) + (6S)-5,6,7,8-tetrahydrofolate + H(+). In terms of biological role, attaches a formyl group to the free amino group of methionyl-tRNA(fMet). The formyl group appears to play a dual role in the initiator identity of N-formylmethionyl-tRNA by promoting its recognition by IF2 and preventing the misappropriation of this tRNA by the elongation apparatus. The chain is Methionyl-tRNA formyltransferase from Kosmotoga olearia (strain ATCC BAA-1733 / DSM 21960 / TBF 19.5.1).